Here is a 628-residue protein sequence, read N- to C-terminus: 3-hydroxy-3-methylglutaryl-coenzyme A reductase 2 (628 aa).

A run of 2 helical transmembrane segments spans residues 38–58 (PLYL…YFLL) and 78–98 (EIVA…FFGI). Residues 99–212 (DFVQSLIIRP…HEKTVIVTTE (114 aa)) are linker. The N-linked (GlcNAc...) asparagine glycan is linked to Asn153. Positions 213 to 628 (EDEEIIKSVV…SSKDMSNLSS (416 aa)) are catalytic. Residue Glu307 is the Charge relay system of the active site. The N-linked (GlcNAc...) asparagine glycan is linked to Asn371. Residue Lys439 is the Charge relay system of the active site. An N-linked (GlcNAc...) asparagine glycan is attached at Asn484. Asp515 functions as the Charge relay system in the catalytic mechanism. His613 functions as the Proton donor in the catalytic mechanism. 2 N-linked (GlcNAc...) asparagine glycosylation sites follow: Asn617 and Asn625.

The protein belongs to the HMG-CoA reductase family.

The protein localises to the endoplasmic reticulum membrane. It localises to the mitochondrion membrane. Its subcellular location is the plastid membrane. The catalysed reaction is (R)-mevalonate + 2 NADP(+) + CoA = (3S)-3-hydroxy-3-methylglutaryl-CoA + 2 NADPH + 2 H(+). It participates in metabolic intermediate biosynthesis; (R)-mevalonate biosynthesis; (R)-mevalonate from acetyl-CoA: step 3/3. Catalyzes the synthesis of mevalonate. The specific precursor of all isoprenoid compounds present in plants. The polypeptide is 3-hydroxy-3-methylglutaryl-coenzyme A reductase 2 (HMG2) (Gossypium hirsutum (Upland cotton)).